A 766-amino-acid chain; its full sequence is FYVE, RhoGEF and PH domain-containing protein 4 (766 aa).

Disordered regions lie at residues 1 to 20, 46 to 83, and 134 to 188; these read MEEIKPASASCVSKEKPSKV, NLNAPRTPGRHGLTTTPQQKLLSQHLPQRQGNDTDKTQ, and ETAT…ESPL. The segment at 1 to 150 is actin filament-binding; it reads MEEIKPASAS…SPTTDSCDGN (150 aa). Composition is skewed to polar residues over residues 58–83 and 145–157; these read LTTTPQQKLLSQHLPQRQGNDTDKTQ and DSCDGNASDSSYR. Positions 167–184 are enriched in basic and acidic residues; it reads LEERGAETETKVQERENG. The DH domain maps to 206–393; the sequence is KLHKIANELL…STAASHSNSA (188 aa). In terms of domain architecture, PH 1 spans 422–521; that stretch reads ELIKEGQILK…WIKALQETID (100 aa). The segment at 559 to 619 adopts an FYVE-type zinc-finger fold; sequence DNEVTMCMKC…VCKDCYQIIS (61 aa). Zn(2+)-binding residues include cysteine 565, cysteine 568, cysteine 582, cysteine 585, cysteine 590, cysteine 593, cysteine 611, and cysteine 614. The 98-residue stretch at 643–740 folds into the PH 2 domain; the sequence is NSVVCSFLQY…WLKVILLAVT (98 aa). Residues serine 702 and serine 716 each carry the phosphoserine modification. The disordered stretch occupies residues 742–766; it reads ETPGGPNEHPATLDDHPEPKKKSEC. The segment covering 752 to 766 has biased composition (basic and acidic residues); sequence ATLDDHPEPKKKSEC.

Homooligomer. Expressed in different tissues, including brain, cerebellum, peripheral nerve, skeletal muscle, heart, uterus, placenta and testis.

The protein localises to the cytoplasm. The protein resides in the cytoskeleton. It is found in the cell projection. It localises to the filopodium. Activates CDC42, a member of the Ras-like family of Rho- and Rac proteins, by exchanging bound GDP for free GTP. Plays a role in regulating the actin cytoskeleton and cell shape. Activates MAPK8. The polypeptide is FYVE, RhoGEF and PH domain-containing protein 4 (FGD4) (Homo sapiens (Human)).